Reading from the N-terminus, the 894-residue chain is Histone-lysine N-methyltransferase PRDM9 (894 aa).

Disordered stretches follow at residues 1-23 and 143-174; these read MSPEKSQEESPEEDTERTERKPM and SGSEQAQKPVSPSGEASTSGQHSRLKLELRKK. A KRAB-related domain is found at 23-86; that stretch reads MVKDAFKDIS…RRQAIKLQVD (64 aa). Polar residues predominate over residues 143-164; the sequence is SGSEQAQKPVSPSGEASTSGQH. The Zn(2+) site is built by cysteine 205, cysteine 208, cysteine 216, and histidine 219. The 115-residue stretch at 244–358 folds into the SET domain; sequence PGLRIGPSGI…PGCELLVWYG (115 aa). Residues 256–258, tyrosine 291, and 320–321 each bind S-adenosyl-L-methionine; these read AGL and NC. 288–294 is a binding site for substrate; the sequence is NNGYSWL. Tyrosine 357 lines the substrate pocket. Lysine 368 bears the N6,N6,N6-trimethyllysine; alternate mark. Residue lysine 368 is modified to N6-methyllysine; alternate. Lysine 372 and lysine 374 each carry N6-methyllysine. The C2H2-type 1 zinc finger occupies 388–411; the sequence is HPCPSCCLAFSSQKFLSQHVERNH. Zn(2+) is bound by residues cysteine 390, cysteine 393, histidine 406, and histidine 411. The disordered stretch occupies residues 408 to 469; that stretch reads ERNHSSQNFP…SKLLNKRTWQ (62 aa). Residues 444–461 are compositionally biased toward basic and acidic residues; the sequence is PHSRNDKTKGQEIKERSK. Residues 524–546 form a C2H2-type 2; degenerate zinc finger; the sequence is VKYGECGQGFSVKSDVITHQRTH. C2H2-type zinc fingers lie at residues 552-574, 580-602, 608-630, 636-658, 664-686, 692-714, 720-742, 748-770, 776-798, 804-826, 832-854, and 860-882; these read YVCRECGRGFSWKSHLLIHQRIH, YVCRECGRGFSWQSVLLTHQRTH, YVCRECGRGFSRQSVLLTHQRRH, YVCRECGRGFSNKSHLLRHQRTH, YVCRECGRGFRDKSHLLRHQRTH, YVCRECGRGFRDKSNLLSHQRTH, YVCRECGRGFRNKSHLLRHQRTH, and YVCRECGRGFSDRSSLCYHQRTH. Residues cysteine 722, cysteine 725, histidine 738, histidine 742, cysteine 750, cysteine 753, histidine 766, histidine 770, cysteine 778, cysteine 781, histidine 794, histidine 798, cysteine 806, cysteine 809, histidine 822, and histidine 826 each contribute to the Zn(2+) site. Residues 730 to 820 form a DNA-binding region; that stretch reads SNKSHLLRHQ…RGFSNKSHLL (91 aa).

Belongs to the class V-like SAM-binding methyltransferase superfamily. As to quaternary structure, homodimer. Interacts with EHMT2 and CDYL; interaction only takes place when PRDM9 is bound to hotspot DNA. Interacts with CXXC1; this interaction does not link PRDM9-activated recombination hotspot sites with DSB machinery and is not required for the hotspot recognition pathway. Forms a complex with EWSR1, REC8, SYCP3 and SYCP1; complex formation is dependent of phosphorylated form of REC8 and requires PRDM9 bound to hotspot DNA; EWSR1 joins PRDM9 with the chromosomal axis through REC8. In terms of processing, mono-methylated; automethylated. Tri-methylated; automethylated. Mono-methylation is predominant; automethylation is lower and slower than H3 peptide methylation and is in a highest S-adenosyl-L-methionine concentration-dependent. There are two major sites for automethylation at Lys-368 and Lys-374. Lysines can be simultaneously methylated, such as Lys-368(me3)/Lys-372(me1), Lys-368(me1)/Lys-374(me1) and Lys-368(me1)/Lys-372(me1)/Lys-374(me1). Automethylation is an intramolecular (cis) process.

It localises to the nucleus. It is found in the chromosome. The enzyme catalyses L-lysyl-[protein] + S-adenosyl-L-methionine = N(6)-methyl-L-lysyl-[protein] + S-adenosyl-L-homocysteine + H(+). The catalysed reaction is N(6)-methyl-L-lysyl-[protein] + S-adenosyl-L-methionine = N(6),N(6)-dimethyl-L-lysyl-[protein] + S-adenosyl-L-homocysteine + H(+). It carries out the reaction L-lysyl(4)-[histone H3] + 3 S-adenosyl-L-methionine = N(6),N(6),N(6)-trimethyl-L-lysyl(4)-[histone H3] + 3 S-adenosyl-L-homocysteine + 3 H(+). It catalyses the reaction L-lysyl(36)-[histone H3] + 3 S-adenosyl-L-methionine = N(6),N(6),N(6)-trimethyl-L-lysyl(36)-[histone H3] + 3 S-adenosyl-L-homocysteine + 3 H(+). The enzyme catalyses L-lysyl(9)-[histone H3] + 3 S-adenosyl-L-methionine = N(6),N(6),N(6)-trimethyl-L-lysyl(9)-[histone H3] + 3 S-adenosyl-L-homocysteine + 3 H(+). The catalysed reaction is L-lysyl(20)-[histone H4] + S-adenosyl-L-methionine = N(6)-methyl-L-lysyl(20)-[histone H4] + S-adenosyl-L-homocysteine + H(+). It carries out the reaction N(6)-methyl-L-lysyl(20)-[histone H4] + S-adenosyl-L-methionine = N(6),N(6)-dimethyl-L-lysyl(20)-[histone H4] + S-adenosyl-L-homocysteine + H(+). Its activity is regulated as follows. Inhibited by suramin with an IC(50) of 4.1 uM. Its function is as follows. Histone methyltransferase that sequentially mono-, di-, and tri-methylates both 'Lys-4' (H3K4) and 'Lys-36' (H3K36) of histone H3 to produce respectively trimethylated 'Lys-4' (H3K4me3) and trimethylated 'Lys-36' (H3K36me3) histone H3 and plays a key role in meiotic prophase by determining hotspot localization thereby promoting meiotic recombination. Can also methylate all four core histones with H3 being the best substrate and the most highly modified. Is also able, on one hand, to mono and di-methylate H4K20 and on other hand to trimethylate H3K9 with the di-methylated H3K9 as the best substrate. During meiotic prophase, binds specific DNA sequences through its zinc finger domains thereby determining hotspot localization where it promotes local H3K4me3 and H3K36me3 enrichment on the same nucleosomes through its histone methyltransferase activity. Thereby promotes double-stranded breaks (DSB) formation, at this subset of PRDM9-binding sites, that initiates meiotic recombination for the proper meiotic progression. During meiotic progression hotspot-bound PRDM9 interacts with several complexes; in early leptonema binds CDYL and EHMT2 followed by EWSR1 and CXXC1 by the end of leptonema. EWSR1 joins PRDM9 with the chromosomal axis through REC8. In this way, controls the DSB repair pathway, pairing of homologous chromosomes and sex body formation. Moreover plays a central role in the transcriptional activation of genes during early meiotic prophase thanks to H3K4me3 and H3K36me3 enrichment that represents a specific tag for epigenetic transcriptional activation. In addition performs automethylation. Acetylation and phosphorylation of histone H3 attenuate or prevent histone H3 methylation. This is Histone-lysine N-methyltransferase PRDM9 from Homo sapiens (Human).